We begin with the raw amino-acid sequence, 348 residues long: VIP36-like protein (348 aa).

Positions Met-1 to Gly-38 are cleaved as a signal peptide. At Pro-39–Ala-313 the chain is on the lumenal side. One can recognise an L-type lectin-like domain in the interval Glu-49–Leu-274. Ser-93 and Asp-128 together coordinate a carbohydrate. Positions 159, 161, and 163 each coordinate Ca(2+). 2 residues coordinate a carbohydrate: Tyr-161 and Asn-163. Asn-181 carries an N-linked (GlcNAc...) asparagine glycan. Residue His-188 coordinates a carbohydrate. Residue Asp-191 coordinates Ca(2+). A disulfide bridge connects residues Cys-200 and Cys-237. Residue Gly-258–Leu-260 coordinates a carbohydrate. A helical transmembrane segment spans residues Leu-314–Ile-334. Residues Leu-335–Tyr-348 are Cytoplasmic-facing. Positions Arg-344–Arg-346 match the Endoplasmic reticulum retention signal motif.

Its subcellular location is the endoplasmic reticulum membrane. It localises to the golgi apparatus membrane. May be involved in the regulation of export from the endoplasmic reticulum of a subset of glycoproteins. May function as a regulator of ERGIC-53. This Bos taurus (Bovine) protein is VIP36-like protein (LMAN2L).